A 207-amino-acid chain; its full sequence is Sodium/potassium-transporting ATPase subunit beta-1-interacting protein 1 (207 aa).

Helical transmembrane passes span 2–22 (GRCS…AAAL), 35–55 (APIL…LGTL), and 62–82 (LILY…IICF). A glycan (N-linked (GlcNAc...) asparagine) is linked at Asn-100. Residues 147-167 (ALSSALQIFLALFGFVYACYV) traverse the membrane as a helical segment.

Belongs to the NKAIN family. Interacts with atp1b1 C-terminus.

It localises to the cell membrane. The chain is Sodium/potassium-transporting ATPase subunit beta-1-interacting protein 1 (nkain1) from Xenopus laevis (African clawed frog).